Reading from the N-terminus, the 439-residue chain is MDQLAHLYHAHMAELNRRVGEICQRENLSGLVIHSGQPHRQFLDDLNYPFKVNPQFKAWLPILDTPNCWVIANGQDKPTLVFYRPVDFWHKVNDVPQAFWTEHFDIQLLTKPDRIADFLPKDLASWAYIGEHLDVADVLGFAARNPDAVMNYLHYHRADKTQYELECMRRANQIAVKGHLAAKNAFYDGASEFEIQQRYLLEIGQGENEVPYGNIVALNQNAAILHYTALEHVKPAQRLSFLIDAGASYHGYAADITRTYSFEKNRFYELIVALDKVQLAIIEQMKPGVKYVDLHIATHHYIGQLLIDFGLANGTAEQLVAQGVTSAFFPHGLGHMLGLQVHDMGGYSHDERGTHIAAPEAHPFLRCTRVLAANQVLTIEPGLYIIDTLLNQLSATAKQAINWTTVDEMRPFGGIRIEDNVIVHQDRVENMTREFGLVD.

5 residues coordinate Mn(2+): D244, D255, H335, E380, and E418.

It belongs to the peptidase M24B family. Bacterial-type prolidase subfamily. It depends on Mn(2+) as a cofactor.

It carries out the reaction Xaa-L-Pro dipeptide + H2O = an L-alpha-amino acid + L-proline. In terms of biological role, splits dipeptides with a prolyl residue in the C-terminal position. This Shewanella frigidimarina (strain NCIMB 400) protein is Xaa-Pro dipeptidase.